The chain runs to 443 residues: Threonine/serine transporter TdcC (443 aa).

Transmembrane regions (helical) follow at residues 22 to 42 (TTWTLGLFGTAIGAGVLFFPI), 44 to 64 (AGFGGLIPILLMLVLAYPIAF), 97 to 117 (GVVITFLYFFAICPLLWIYGV), 140 to 160 (FVALFLLLLMAFVIWFGKDLM), 163 to 183 (VMSYLVWPFIASLVLISLSLI), 207 to 227 (ILVTVWLGISIMVFSFNFSPI), 259 to 279 (ASMLMVAVVMFFAFSCLFTLS), 319 to 339 (ASIIALVAIFKSFFGHYLGTL), 366 to 386 (ISMIFIMGSTWVVAYANPNIL), 389 to 409 (IEAMGAPIIASLLCLLPMYAI), and 423 to 443 (DNVFVTLIGLLTILNIVYKLF).

This sequence belongs to the amino acid/polyamine transporter 2 family. SdaC/TdcC subfamily.

It is found in the cell inner membrane. The catalysed reaction is L-threonine(in) + H(+)(in) = L-threonine(out) + H(+)(out). The enzyme catalyses L-serine(in) + H(+)(in) = L-serine(out) + H(+)(out). Its function is as follows. Involved in the import of threonine and serine into the cell, with the concomitant import of a proton (symport system). The polypeptide is Threonine/serine transporter TdcC (Salmonella newport (strain SL254)).